We begin with the raw amino-acid sequence, 144 residues long: MGHSVLLINGPNLNLLGTREPHIYGHTTLKDLEESCKEHAQSLGAELQSFQSNAEGTIIDRIHEARGKIDVIIINPAGYTHTSVAIRDALAGVDIPFIELHISNTHTREKFRHHSYLSDKAAAVIMGFGVDGYKYAVDYAVRNL.

The active-site Proton acceptor is the Tyr-24. Residues Asn-75, His-81, and Asp-88 each coordinate substrate. His-101 acts as the Proton donor in catalysis. Residues 102–103 (IS) and Arg-112 contribute to the substrate site.

The protein belongs to the type-II 3-dehydroquinase family. Homododecamer. Adopts a ring-like structure, composed of an arrangement of two hexameric rings stacked on top of one another.

It carries out the reaction 3-dehydroquinate = 3-dehydroshikimate + H2O. Its pathway is aromatic compound metabolism; 3,4-dihydroxybenzoate biosynthesis; 3,4-dihydroxybenzoate from 3-dehydroquinate: step 1/2. Functionally, is involved in the catabolism of quinate. Allows the utilization of quinate as carbon source via the beta-ketoadipate pathway. The chain is Catabolic 3-dehydroquinase 1 from Fusarium vanettenii (strain ATCC MYA-4622 / CBS 123669 / FGSC 9596 / NRRL 45880 / 77-13-4) (Fusarium solani subsp. pisi).